Consider the following 538-residue polypeptide: Chaperonin GroEL 1 (538 aa).

Residues 29–32 (TLGP), 86–90 (DGTTT), Gly-413, 478–480 (NAA), and Asp-494 contribute to the ATP site.

It belongs to the chaperonin (HSP60) family. As to quaternary structure, forms a cylinder of 14 subunits composed of two heptameric rings stacked back-to-back. Interacts with the co-chaperonin GroES.

The protein resides in the cytoplasm. The enzyme catalyses ATP + H2O + a folded polypeptide = ADP + phosphate + an unfolded polypeptide.. Together with its co-chaperonin GroES, plays an essential role in assisting protein folding. The GroEL-GroES system forms a nano-cage that allows encapsulation of the non-native substrate proteins and provides a physical environment optimized to promote and accelerate protein folding. The polypeptide is Chaperonin GroEL 1 (Corynebacterium glutamicum (strain ATCC 13032 / DSM 20300 / JCM 1318 / BCRC 11384 / CCUG 27702 / LMG 3730 / NBRC 12168 / NCIMB 10025 / NRRL B-2784 / 534)).